A 65-amino-acid chain; its full sequence is Large ribosomal subunit protein bL33c (65 aa).

The protein belongs to the bacterial ribosomal protein bL33 family.

The protein localises to the plastid. The protein resides in the chloroplast. This Chaetosphaeridium globosum (Charophycean green alga) protein is Large ribosomal subunit protein bL33c.